The chain runs to 327 residues: uncharacterized protein (327 aa).

A disordered region spans residues 129–306; the sequence is TPLQNQEATT…DNKKTVTTSS (178 aa). Polar residues predominate over residues 130–144; that stretch reads PLQNQEATTSPTIES. Composition is skewed to basic and acidic residues over residues 184-196 and 233-276; these read KSVE…DRNV and TKDE…EKIV.

This is an uncharacterized protein from Caenorhabditis elegans.